A 471-amino-acid chain; its full sequence is Proline--tRNA ligase (471 aa).

Belongs to the class-II aminoacyl-tRNA synthetase family. ProS type 3 subfamily. As to quaternary structure, homodimer.

It localises to the cytoplasm. The catalysed reaction is tRNA(Pro) + L-proline + ATP = L-prolyl-tRNA(Pro) + AMP + diphosphate. Its function is as follows. Catalyzes the attachment of proline to tRNA(Pro) in a two-step reaction: proline is first activated by ATP to form Pro-AMP and then transferred to the acceptor end of tRNA(Pro). The sequence is that of Proline--tRNA ligase from Archaeoglobus fulgidus (strain ATCC 49558 / DSM 4304 / JCM 9628 / NBRC 100126 / VC-16).